A 111-amino-acid chain; its full sequence is CRIB domain-containing protein RIC2 (111 aa).

One can recognise a CRIB domain in the interval 71 to 84; sequence IGFPTDVKHLSHIG.

Interacts with ARAC11/ROP1. Expressed in roots, leaves, stems, flowers, siliques and pollen.

Its subcellular location is the cell membrane. In terms of biological role, functions as a downstream effector of Rho-related GTP binding proteins of the 'Rho of Plants' (ROPs) family. Participates in the propagation of ROP GTPase signals in specific cellular responses. Is involved in pollen tube growth regulation through its interaction with ARAC11/ROP1. The chain is CRIB domain-containing protein RIC2 (RIC2) from Arabidopsis thaliana (Mouse-ear cress).